A 404-amino-acid chain; its full sequence is Advanced glycosylation end product-specific receptor (404 aa).

The signal sequence occupies residues 1–22 (MAAGTAVGAWVLVLSLWGAVVG). The Ig-like V-type domain maps to 23-116 (AQNITARIGE…KETKSNYRVR (94 aa)). Topologically, residues 23 to 342 (AQNITARIGE…VGGSGLGTLA (320 aa)) are extracellular. N-linked (GlcNAc...) asparagine glycans are attached at residues Asn25 and Asn81. Disulfide bonds link Cys38/Cys99 and Cys144/Cys208. Ig-like C2-type domains are found at residues 124–221 (PEIV…RALR) and 227–317 (PRVW…RAVS). The helical transmembrane segment at 343–363 (LALGILGGLGTAALLIGVILW) threads the bilayer. Topologically, residues 364–404 (QRRQRRGEERKAPENQEEEEERAELNQSEEPEAGESSTGGP) are cytoplasmic. The segment at 367 to 404 (QRRGEERKAPENQEEEEERAELNQSEEPEAGESSTGGP) is disordered. The span at 378-396 (NQEEEEERAELNQSEEPEA) shows a compositional bias: acidic residues. Ser391 carries the post-translational modification Phosphoserine; by PKC/PRKCZ and ATM.

As to quaternary structure, constitutive homodimer; disulfide-linked. Forms homooligomers. Interacts with S100A1 and APP. Interacts with S100B, S100A12 and S100A14. Interacts with TIRAP. Interacts with HMGB1. Interacts with LGP2; this interaction plays an important role in AGER-mediated pro-inflammatory responses and cytokine release. Interacts with double-strand break repair protein MRE11 which is a core component of the MRN complex. The interaction enhances MRE11 endonuclease activity and promotes DNA repair. Interacts with the MCM2-7 complex via interaction with complex member MCM2; the interaction is increased following DNA replication stress and stabilizes the MCM2-7 complex at replication forks. Interacts with longistatin, a protein from the saliva of the tick, Haemaphysalis longicornis; the interaction attenuates AGER-mediated production of reactive oxygen species (ROS), activation of NF-kappa-B and expression of adhesion molecules and cytokines in human endothelial cells. In terms of processing, phosphorylated on its cytoplasmic domain by PKCzeta/PRKCZ upon ligand binding. Phosphorylated by ATM following DNA damage. Targeted by the ubiquitin E3 ligase subunit FBXO10 to mediate its ubiquitination and degradation. As to expression, endothelial cells. Increased expression in pre-term labor and preeclampsia placentas compared to controls.

It localises to the cell membrane. It is found in the cell projection. The protein localises to the phagocytic cup. The protein resides in the early endosome. Its subcellular location is the nucleus. It localises to the secreted. Cell surface pattern recognition receptor that senses endogenous stress signals with a broad ligand repertoire including advanced glycation end products, S100 proteins, high-mobility group box 1 protein/HMGB1, amyloid beta/APP oligomers, nucleic acids, histones, phospholipids and glycosaminoglycans. Advanced glycosylation end products are nonenzymatically glycosylated proteins which accumulate in vascular tissue in aging and at an accelerated rate in diabetes. These ligands accumulate at inflammatory sites during the pathogenesis of various diseases including diabetes, vascular complications, neurodegenerative disorders and cancers, and RAGE transduces their binding into pro-inflammatory responses. Upon ligand binding, uses TIRAP and MYD88 as adapters to transduce the signal ultimately leading to the induction of inflammatory cytokines IL6, IL8 and TNFalpha through activation of NF-kappa-B. Interaction with S100A12 on endothelium, mononuclear phagocytes, and lymphocytes triggers cellular activation, with generation of key pro-inflammatory mediators. Interaction with S100B after myocardial infarction may play a role in myocyte apoptosis by activating ERK1/2 and p53/TP53 signaling. Contributes to the translocation of amyloid-beta peptide (ABPP) across the cell membrane from the extracellular to the intracellular space in cortical neurons. ABPP-initiated RAGE signaling, especially stimulation of p38 mitogen-activated protein kinase (MAPK), has the capacity to drive a transport system delivering ABPP as a complex with RAGE to the intraneuronal space. Participates in endothelial albumin transcytosis together with HMGB1 through the RAGE/SRC/Caveolin-1 pathway, leading to endothelial hyperpermeability. Mediates the loading of HMGB1 in extracellular vesicles (EVs) that shuttle HMGB1 to hepatocytes by transferrin-mediated endocytosis and subsequently promote hepatocyte pyroptosis by activating the NLRP3 inflammasome. Binds to DNA and promotes extracellular hypomethylated DNA (CpG DNA) uptake by cells via the endosomal route to activate inflammatory responses. Mediates phagocytosis by non-professional phagocytes (NPP) and this is enhanced by binding to ligands including RNA, DNA, HMGB1 and histones. Promotes NPP-mediated phagocytosis of Saccharomyces cerevisiae spores by binding to RNA attached to the spore wall. Also promotes NPP-mediated phagocytosis of apoptotic cells. Following DNA damage, recruited to DNA double-strand break sites where it colocalizes with the MRN repair complex via interaction with double-strand break repair protein MRE11. Enhances the endonuclease activity of MRE11, promoting the end resection of damaged DNA. Promotes DNA damage repair in trophoblasts which enhances trophoblast invasion and contributes to placental development and maintenance. Protects cells from DNA replication stress by localizing to damaged replication forks where it stabilizes the MCM2-7 complex and promotes faithful progression of the replication fork. Mediates the production of reactive oxygen species (ROS) in human endothelial cells. The polypeptide is Advanced glycosylation end product-specific receptor (AGER) (Homo sapiens (Human)).